A 288-amino-acid polypeptide reads, in one-letter code: Protease HtpX (288 aa).

A run of 2 helical transmembrane segments spans residues 5 to 25 (IALFLATNLAVLILASIVMSL) and 34 to 54 (SGLLVMAGIFGFGGSFISLLL). Residue His-140 coordinates Zn(2+). Glu-141 is a catalytic residue. Residue His-144 participates in Zn(2+) binding. Transmembrane regions (helical) follow at residues 155–175 (LLQGVLNTFVIVLARVVGGII) and 190–210 (FAYFIIVFVLEMVFGLFATMI). Glu-219 is a binding site for Zn(2+).

This sequence belongs to the peptidase M48B family. Zn(2+) is required as a cofactor.

It is found in the cell inner membrane. This chain is Protease HtpX, found in Stenotrophomonas maltophilia (strain R551-3).